A 454-amino-acid polypeptide reads, in one-letter code: UDP-N-acetylmuramoyl-tripeptide--D-alanyl-D-alanine ligase (454 aa).

116–122 provides a ligand contact to ATP; sequence GSVGKTT.

Belongs to the MurCDEF family. MurF subfamily.

It localises to the cytoplasm. The enzyme catalyses D-alanyl-D-alanine + UDP-N-acetyl-alpha-D-muramoyl-L-alanyl-gamma-D-glutamyl-meso-2,6-diaminopimelate + ATP = UDP-N-acetyl-alpha-D-muramoyl-L-alanyl-gamma-D-glutamyl-meso-2,6-diaminopimeloyl-D-alanyl-D-alanine + ADP + phosphate + H(+). It functions in the pathway cell wall biogenesis; peptidoglycan biosynthesis. Involved in cell wall formation. Catalyzes the final step in the synthesis of UDP-N-acetylmuramoyl-pentapeptide, the precursor of murein. The polypeptide is UDP-N-acetylmuramoyl-tripeptide--D-alanyl-D-alanine ligase (Synechocystis sp. (strain ATCC 27184 / PCC 6803 / Kazusa)).